The following is a 144-amino-acid chain: Phospholipase A2, membrane associated (144 aa).

An N-terminal signal peptide occupies residues 1 to 20 (MKTLLLLAVIMAIGLLQVHG). Disulfide bonds link Cys46/Cys137, Cys48/Cys64, Cys63/Cys117, Cys69/Cys144, Cys70/Cys110, Cys79/Cys103, and Cys97/Cys108. Tyr47, Gly49, and Ser51 together coordinate Ca(2+). Residue His67 is part of the active site. Asp68 serves as a coordination point for Ca(2+). Asp111 is a catalytic residue.

It belongs to the phospholipase A2 family. Ca(2+) is required as a cofactor.

It localises to the secreted. The protein resides in the cell membrane. Its subcellular location is the mitochondrion outer membrane. The catalysed reaction is a 1,2-diacyl-sn-glycero-3-phosphoethanolamine + H2O = a 1-acyl-sn-glycero-3-phosphoethanolamine + a fatty acid + H(+). It catalyses the reaction 1-hexadecanoyl-2-(9Z-octadecenoyl)-sn-glycero-3-phosphoethanolamine + H2O = 1-hexadecanoyl-sn-glycero-3-phosphoethanolamine + (9Z)-octadecenoate + H(+). It carries out the reaction 1-hexadecanoyl-2-(9Z,12Z-octadecadienoyl)-sn-glycero-3-phosphoethanolamine + H2O = 1-hexadecanoyl-sn-glycero-3-phosphoethanolamine + (9Z,12Z)-octadecadienoate + H(+). The enzyme catalyses 1-hexadecanoyl-2-(5Z,8Z,11Z,14Z-eicosatetraenoyl)-sn-glycero-3-phosphoethanolamine + H2O = 1-hexadecanoyl-sn-glycero-3-phosphoethanolamine + (5Z,8Z,11Z,14Z)-eicosatetraenoate + H(+). The catalysed reaction is N-hexadecanoyl-1,2-di-(9Z-octadecenoyl)-sn-glycero-3-phosphoethanolamine + H2O = N-hexadecanoyl-1-(9Z-octadecenoyl)-sn-glycero-3-phosphoethanolamine + (9Z)-octadecenoate + H(+). It catalyses the reaction 1,2-dihexadecanoyl-sn-glycero-3-phospho-(1'-sn-glycerol) + H2O = 1-hexadecanoyl-sn-glycero-3-phospho-(1'-sn-glycerol) + hexadecanoate + H(+). It carries out the reaction 1-hexadecanoyl-2-(9Z-octadecenoyl)-sn-glycero-3-phosphoglycerol + H2O = 1-hexadecanoyl-sn-glycero-3-phosphoglycerol + (9Z)-octadecenoate + H(+). The enzyme catalyses 1-hexadecanoyl-2-(9Z-octadecenoyl)-sn-glycero-3-phospho-(1'-sn-glycerol) + H2O = 1-hexadecanoyl-sn-glycero-3-phospho-(1'-sn-glycerol) + (9Z)-octadecenoate + H(+). The catalysed reaction is a 1,2-diacyl-sn-glycero-3-phosphocholine + H2O = a 1-acyl-sn-glycero-3-phosphocholine + a fatty acid + H(+). It catalyses the reaction 1,2-dihexadecanoyl-sn-glycero-3-phosphocholine + H2O = 1-hexadecanoyl-sn-glycero-3-phosphocholine + hexadecanoate + H(+). It carries out the reaction 1-hexadecanoyl-2-(9Z-octadecenoyl)-sn-glycero-3-phosphocholine + H2O = 1-hexadecanoyl-sn-glycero-3-phosphocholine + (9Z)-octadecenoate + H(+). The enzyme catalyses 1-hexadecanoyl-2-(9Z,12Z-octadecadienoyl)-sn-glycero-3-phosphocholine + H2O = (9Z,12Z)-octadecadienoate + 1-hexadecanoyl-sn-glycero-3-phosphocholine + H(+). The catalysed reaction is 1-hexadecanoyl-2-(4Z,7Z,10Z,13Z,16Z,19Z-docosahexaenoyl)-sn-glycero-3-phosphocholine + H2O = (4Z,7Z,10Z,13Z,16Z,19Z)-docosahexaenoate + 1-hexadecanoyl-sn-glycero-3-phosphocholine + H(+). Secretory calcium-dependent phospholipase A2 that primarily targets extracellular phospholipids with implications in host antimicrobial defense, inflammatory response and tissue regeneration. Hydrolyzes the ester bond of the fatty acyl group attached at sn-2 position of phospholipids (phospholipase A2 activity) with preference for phosphatidylethanolamines and phosphatidylglycerols over phosphatidylcholines. Contributes to lipid remodeling of cellular membranes and generation of lipid mediators involved in pathogen clearance. Displays bactericidal activity against Gram-positive bacteria by directly hydrolyzing phospholipids of the bacterial membrane. Upon sterile inflammation, targets membrane phospholipids of extracellular mitochondria released from activated platelets, generating free unsaturated fatty acids such as arachidonate that is used by neighboring leukocytes to synthesize inflammatory eicosanoids such as leukotrienes. Simultaneously, by compromising mitochondrial membrane integrity, promotes the release in circulation of potent damage-associated molecular pattern molecules that activate the innate immune response. Plays a stem cell regulator role in the intestinal crypt. Within intracellular compartment mediates Paneth cell differentiation and its stem cell supporting functions by inhibiting Wnt signaling pathway in intestinal stem cell (ICS). Secreted in the intestinal lumen upon inflammation, acts in an autocrine way and promotes prostaglandin E2 synthesis that stimulates Wnt signaling pathway in ICS cells and tissue regeneration. May play a role in the biosynthesis of N-acyl ethanolamines that regulate energy metabolism and inflammation. Hydrolyzes N-acyl phosphatidylethanolamines to N-acyl lysophosphatidylethanolamines, which are further cleaved by a lysophospholipase D to release N-acyl ethanolamines. Independent of its catalytic activity, acts as a ligand for integrins. Binds to and activates integrins ITGAV:ITGB3, ITGA4:ITGB1 and ITGA5:ITGB1. Binds to a site (site 2) which is distinct from the classical ligand-binding site (site 1) and induces integrin conformational changes and enhanced ligand binding to site 1. Induces cell proliferation in an integrin-dependent manner. The chain is Phospholipase A2, membrane associated (PLA2G2A) from Bos taurus (Bovine).